The primary structure comprises 362 residues: Transcription factor Sox-7 (362 aa).

The interval 21 to 41 (EDLSDGLSPHRSPREKGSETR) is disordered. A compositionally biased stretch (basic and acidic residues) spans 32–41 (SPREKGSETR). The segment at residues 42–110 (IRRPMNAFMV…QHMQDYPNYK (69 aa)) is a DNA-binding region (HMG box). The Sox C-terminal domain occupies 245 to 362 (QTGSSMIPPV…ATYYNSYSVS (118 aa)).

In terms of tissue distribution, expressed in the embryonic pronephric sinus as well as posterior cardinal veins.

It localises to the nucleus. Transcription factor. Binds to the DNA sequence 5'-AACAAT-3'. Acts downstream of vegt and upstream of nodal signaling to promote endodermal and mesodermal differentiation by promoting vegt-induced expression of both endodermal genes (including endodermin) and mesodermal genes (including snai1/snail and snai2/slug). Induces expression of multiple nodal genes (including nodal, nodal2, nodal4, nodal5 and nodal6) and binds directly to sites within the promoter of the nodal5 gene. The endodermal and mesodermal specification pathways then interact to initiate cardiogenesis. Acts partially redundantly with sox18 during cardiogenesis. Also acts as an antagonist of beta-catenin signaling. Regulates (possibly indirectly) development of the pronephros, the functional larval kidney. The sequence is that of Transcription factor Sox-7 from Xenopus tropicalis (Western clawed frog).